The following is a 638-amino-acid chain: 1-deoxy-D-xylulose-5-phosphate synthase (638 aa).

Thiamine diphosphate-binding positions include His75 and 116–118 (AHS). Asp147 contacts Mg(2+). Residues 148–149 (GA), Asn177, Tyr288, and Glu370 contribute to the thiamine diphosphate site. Asn177 contributes to the Mg(2+) binding site.

Belongs to the transketolase family. DXPS subfamily. As to quaternary structure, homodimer. Requires Mg(2+) as cofactor. It depends on thiamine diphosphate as a cofactor.

It carries out the reaction D-glyceraldehyde 3-phosphate + pyruvate + H(+) = 1-deoxy-D-xylulose 5-phosphate + CO2. It participates in metabolic intermediate biosynthesis; 1-deoxy-D-xylulose 5-phosphate biosynthesis; 1-deoxy-D-xylulose 5-phosphate from D-glyceraldehyde 3-phosphate and pyruvate: step 1/1. Functionally, catalyzes the acyloin condensation reaction between C atoms 2 and 3 of pyruvate and glyceraldehyde 3-phosphate to yield 1-deoxy-D-xylulose-5-phosphate (DXP). The chain is 1-deoxy-D-xylulose-5-phosphate synthase from Cupriavidus pinatubonensis (strain JMP 134 / LMG 1197) (Cupriavidus necator (strain JMP 134)).